Here is a 356-residue protein sequence, read N- to C-terminus: L-Lys-D/L-Arg epimerase (356 aa).

Residues T135 and 160-162 (KVK) each bind substrate. 3 residues coordinate Mg(2+): D190, E216, and D241. Residues K266, D296, and 319-321 (DLD) each bind substrate.

The protein belongs to the mandelate racemase/muconate lactonizing enzyme family. Mg(2+) is required as a cofactor.

In terms of biological role, catalyzes the epimerization of L-Lys-L-Arg to L-Lys-D-Arg. Can also catalyze the epimerization of other cationic dipeptides, such as L-Arg-L-Arg, L-Lys-L-Lys and L-Lys-L-His, but with lower efficiency (in vitro). The protein is L-Lys-D/L-Arg epimerase of Methylococcus capsulatus (strain ATCC 33009 / NCIMB 11132 / Bath).